The chain runs to 376 residues: Probable ATP-dependent RNA helicase YfmL (376 aa).

The Helicase ATP-binding domain occupies 35–205 (AQLIMDGKDV…RELAQEPEVL (171 aa)). Residue 48-55 (SPTGTGKT) participates in ATP binding. Residues 153-156 (DETD) carry the DEAD box motif. One can recognise a Helicase C-terminal domain in the interval 231 to 374 (KLLQKLSRLE…EAVYAGGKLK (144 aa)).

This sequence belongs to the DEAD box helicase family.

It catalyses the reaction ATP + H2O = ADP + phosphate + H(+). Its function is as follows. A probable DEAD-box RNA helicase that plays a role in ribosomal 50S subunit assembly. May be a non-specific RNA helicase. In Bacillus subtilis (strain 168), this protein is Probable ATP-dependent RNA helicase YfmL (yfmL).